A 366-amino-acid polypeptide reads, in one-letter code: Isopentenyl-diphosphate delta-isomerase (366 aa).

6–7 (RK) is a substrate binding site. Residues T63, 64-66 (GMT), S94, and N123 contribute to the FMN site. 94 to 96 (SQR) provides a ligand contact to substrate. Q158 contributes to the substrate binding site. Residue E159 participates in Mg(2+) binding. FMN is bound by residues K191, S216, T221, 273–275 (GIR), and 294–295 (AN).

It belongs to the IPP isomerase type 2 family. In terms of assembly, homooctamer. Dimer of tetramers. FMN serves as cofactor. Requires NADPH as cofactor. The cofactor is Mg(2+).

The protein resides in the cytoplasm. It catalyses the reaction isopentenyl diphosphate = dimethylallyl diphosphate. Its function is as follows. Involved in the biosynthesis of isoprenoids. Catalyzes the 1,3-allylic rearrangement of the homoallylic substrate isopentenyl (IPP) to its allylic isomer, dimethylallyl diphosphate (DMAPP). The chain is Isopentenyl-diphosphate delta-isomerase from Metallosphaera sedula (strain ATCC 51363 / DSM 5348 / JCM 9185 / NBRC 15509 / TH2).